Here is a 627-residue protein sequence, read N- to C-terminus: Alpha-terpineol synthase, chloroplastic (627 aa).

A chloroplast-targeting transit peptide spans 1–53 (MAGITGVMNMKLAARPSSGRHSRGCRPAVVPSAGKQMLLVRRHPPGSASWPTR). Positions 13–90 (AARPSSGRHS…EDRASRNTSS (78 aa)) are disordered. (2E)-geranyl diphosphate is bound by residues Arg-339, Asp-376, Asp-380, Arg-518, and Asp-521. Positions 376 and 380 each coordinate Mg(2+). Residues 376–380 (DDTYD) carry the DDXXD motif motif. Positions 521, 525, and 529 each coordinate Mg(2+).

This sequence belongs to the terpene synthase family. Tpsb subfamily. Monomer. Mg(2+) serves as cofactor. It depends on Mn(2+) as a cofactor. As to expression, expressed in seedling leaf sheaths and roots.

Its subcellular location is the plastid. The protein localises to the chloroplast. It carries out the reaction (2E)-geranyl diphosphate + H2O = (S)-alpha-terpineol + diphosphate. The catalysed reaction is (2E)-geranyl diphosphate = (4S)-limonene + diphosphate. It catalyses the reaction (2E)-geranyl diphosphate = gamma-terpinene + diphosphate. The enzyme catalyses (2E)-geranyl diphosphate = beta-myrcene + diphosphate. It carries out the reaction (2E)-geranyl diphosphate = terpinolene + diphosphate. The catalysed reaction is (2E)-geranyl diphosphate + H2O = 4-terpineol + diphosphate. The protein operates within secondary metabolite biosynthesis; terpenoid biosynthesis. In terms of biological role, component of the volatile terpenes biosynthesis pathways. Mediates the synthesis of a blend of monoterpenes. Converts mainly geranyl diphosphate to alpha-terpineol. Also triggers the biosynthesis of minor monoterpenes including limonene, gamma-terpinene, beta-myrcene, terpinolene and 4-terpineol. The sequence is that of Alpha-terpineol synthase, chloroplastic from Zea mays (Maize).